The chain runs to 341 residues: tRNA N6-adenosine threonylcarbamoyltransferase (341 aa).

The Fe cation site is built by H113 and H117. Residues 141–145 (LVSGG), D174, G187, and N282 each bind substrate. Fe cation is bound at residue D310.

Belongs to the KAE1 / TsaD family. Requires Fe(2+) as cofactor.

The protein resides in the cytoplasm. The enzyme catalyses L-threonylcarbamoyladenylate + adenosine(37) in tRNA = N(6)-L-threonylcarbamoyladenosine(37) in tRNA + AMP + H(+). Its function is as follows. Required for the formation of a threonylcarbamoyl group on adenosine at position 37 (t(6)A37) in tRNAs that read codons beginning with adenine. Is involved in the transfer of the threonylcarbamoyl moiety of threonylcarbamoyl-AMP (TC-AMP) to the N6 group of A37, together with TsaE and TsaB. TsaD likely plays a direct catalytic role in this reaction. The protein is tRNA N6-adenosine threonylcarbamoyltransferase of Porphyromonas gingivalis (strain ATCC BAA-308 / W83).